The sequence spans 370 residues: GTPase Obg (370 aa).

The Obg domain maps to 1–159 (MKFIDEARIE…RMLRLELKVL (159 aa)). The 175-residue stretch at 160–334 (ADVGLLGMPN…LCYAIYDYLA (175 aa)) folds into the OBG-type G domain. Residues 166–173 (GMPNAGKS), 191–195 (FTTLA), 213–216 (DIPG), 284–287 (NKLD), and 315–317 (SAL) each bind GTP. Residues S173 and T193 each coordinate Mg(2+). The tract at residues 344–370 (EEEDLATDVRFRDAPPADGGATPGDDA) is disordered.

It belongs to the TRAFAC class OBG-HflX-like GTPase superfamily. OBG GTPase family. As to quaternary structure, monomer. Requires Mg(2+) as cofactor.

The protein resides in the cytoplasm. Its function is as follows. An essential GTPase which binds GTP, GDP and possibly (p)ppGpp with moderate affinity, with high nucleotide exchange rates and a fairly low GTP hydrolysis rate. Plays a role in control of the cell cycle, stress response, ribosome biogenesis and in those bacteria that undergo differentiation, in morphogenesis control. This Burkholderia ambifaria (strain ATCC BAA-244 / DSM 16087 / CCUG 44356 / LMG 19182 / AMMD) (Burkholderia cepacia (strain AMMD)) protein is GTPase Obg.